The sequence spans 30 residues: DDCGGLFSGCDSNADCCEGYVCRLWCKYKL.

3 cysteine pairs are disulfide-bonded: cysteine 3-cysteine 17, cysteine 10-cysteine 22, and cysteine 16-cysteine 26.

In terms of tissue distribution, expressed by the venom gland.

The protein localises to the secreted. Functionally, inhibitor of voltage-gated potassium channels of the Kv4/KCND family. Blocks calcium channels (Cav). The sequence is that of Kappa-sparatoxin-Hv1d from Heteropoda venatoria (Brown huntsman spider).